The primary structure comprises 443 residues: UDP-N-acetylmuramate--L-alanine ligase (443 aa).

Position 110–116 (110–116 (GAHGKTS)) interacts with ATP.

This sequence belongs to the MurCDEF family.

The protein resides in the cytoplasm. The catalysed reaction is UDP-N-acetyl-alpha-D-muramate + L-alanine + ATP = UDP-N-acetyl-alpha-D-muramoyl-L-alanine + ADP + phosphate + H(+). The protein operates within cell wall biogenesis; peptidoglycan biosynthesis. In terms of biological role, cell wall formation. The sequence is that of UDP-N-acetylmuramate--L-alanine ligase from Lactococcus lactis subsp. cremoris (strain MG1363).